A 309-amino-acid chain; its full sequence is Hydroxyacylglutathione hydrolase, mitochondrial (309 aa).

The N-terminal 24 residues, 1–24, are a transit peptide targeting the mitochondrion; it reads MVLGRGSLCLRSLSVLGAACARRG. K90 carries the post-translational modification N6-acetyllysine. The Zn(2+) site is built by H103, H105, D107, and H108. An N6-acetyllysine modification is found at K117. Zn(2+)-binding residues include H159 and D183. Residues 192 to 194 and 222 to 224 contribute to the substrate site; these read KFY and HEY. Residue H222 coordinates Zn(2+). N6-acetyllysine; alternate is present on K230. At K230 the chain carries N6-succinyllysine; alternate. Position 298–301 (298–301) interacts with substrate; the sequence is RREK.

The protein belongs to the metallo-beta-lactamase superfamily. Glyoxalase II family. Monomer. The cofactor is Zn(2+). In terms of tissue distribution, strongly expressed in testis, skeletal muscle and heart. Weakly expressed in placenta, pancreas, spleen and peripheral blood leukocytes.

It localises to the mitochondrion matrix. The protein localises to the cytoplasm. The enzyme catalyses an S-(2-hydroxyacyl)glutathione + H2O = a 2-hydroxy carboxylate + glutathione + H(+). It carries out the reaction (R)-S-lactoylglutathione + H2O = (R)-lactate + glutathione + H(+). The protein operates within secondary metabolite metabolism; methylglyoxal degradation; (R)-lactate from methylglyoxal: step 2/2. Its function is as follows. Thiolesterase that catalyzes the hydrolysis of S-D-lactoyl-glutathione to form glutathione and D-lactic acid. The protein is Hydroxyacylglutathione hydrolase, mitochondrial (Hagh) of Rattus norvegicus (Rat).